Reading from the N-terminus, the 699-residue chain is SHC SH2 domain-binding protein 1 homolog A (699 aa).

PbH1 repeat units lie at residues 480–502 (SAEL…EIYP), 503–524 (GSKC…LIKD), and 532–554 (IPKI…VLVK). A coiled-coil region spans residues 603–627 (AVEHTNNLEKDQGNLAIAKEEVECE).

The protein localises to the midbody. Its subcellular location is the cytoplasm. The protein resides in the cytoskeleton. It is found in the spindle. May play a role in signaling pathways governing cellular proliferation. The polypeptide is SHC SH2 domain-binding protein 1 homolog A (shcbp1-a) (Xenopus laevis (African clawed frog)).